The primary structure comprises 147 residues: Protein archease (147 aa).

D17, D146, and I147 together coordinate Ca(2+).

This sequence belongs to the archease family.

Activates the tRNA-splicing ligase complex by facilitating the enzymatic turnover of catalytic subunit RtcB. Acts by promoting the guanylylation of RtcB, a key intermediate step in tRNA ligation. Can also alter the NTP specificity of RtcB such that ATP, dGTP or ITP is used efficiently. The sequence is that of Protein archease from Pyrobaculum neutrophilum (strain DSM 2338 / JCM 9278 / NBRC 100436 / V24Sta) (Thermoproteus neutrophilus).